A 106-amino-acid chain; its full sequence is Nucleoid-associated protein BRADO0764 (106 aa).

Belongs to the YbaB/EbfC family. Homodimer.

Its subcellular location is the cytoplasm. The protein localises to the nucleoid. In terms of biological role, binds to DNA and alters its conformation. May be involved in regulation of gene expression, nucleoid organization and DNA protection. The protein is Nucleoid-associated protein BRADO0764 of Bradyrhizobium sp. (strain ORS 278).